The sequence spans 406 residues: Phosphopentomutase (406 aa).

Aspartate 10, aspartate 305, histidine 310, aspartate 346, histidine 347, and histidine 358 together coordinate Mn(2+).

It belongs to the phosphopentomutase family. Mn(2+) serves as cofactor.

The protein localises to the cytoplasm. The catalysed reaction is 2-deoxy-alpha-D-ribose 1-phosphate = 2-deoxy-D-ribose 5-phosphate. It catalyses the reaction alpha-D-ribose 1-phosphate = D-ribose 5-phosphate. It participates in carbohydrate degradation; 2-deoxy-D-ribose 1-phosphate degradation; D-glyceraldehyde 3-phosphate and acetaldehyde from 2-deoxy-alpha-D-ribose 1-phosphate: step 1/2. Isomerase that catalyzes the conversion of deoxy-ribose 1-phosphate (dRib-1-P) and ribose 1-phosphate (Rib-1-P) to deoxy-ribose 5-phosphate (dRib-5-P) and ribose 5-phosphate (Rib-5-P), respectively. The sequence is that of Phosphopentomutase from Sinorhizobium fredii (strain NBRC 101917 / NGR234).